The following is a 105-amino-acid chain: UPF0145 protein LPC_0273 (105 aa).

Belongs to the UPF0145 family.

This Legionella pneumophila (strain Corby) protein is UPF0145 protein LPC_0273.